The following is a 586-amino-acid chain: Guanylate-binding protein 5 (586 aa).

Positions 1 to 306 (MALEIHMSDP…TYVNAISSGD (306 aa)) are NLRP3-binding. The tract at residues 1 to 309 (MALEIHMSDP…NAISSGDLPC (309 aa)) is GTPase domain (Globular). The GB1/RHD3-type G domain occupies 35 to 276 (TQPVVVVAIV…FCSYIFSHSM (242 aa)). Residues 45 to 52 (GLYRTGKS), 67 to 69 (VAS), 181 to 182 (RD), and leucine 245 contribute to the GTP site. The interval 529-586 (MEIAKQNWLAEQQKMQEQQMQEQAAQLSTTFQAQNRSLLSELQHAQRTVNNDDPCVLL) is required for tetramerization, but not for dimerization. Cysteine 583 carries the cysteine methyl ester modification. Cysteine 583 carries the S-geranylgeranyl cysteine lipid modification. Positions 584 to 586 (VLL) are cleaved as a propeptide — removed in mature form.

Belongs to the TRAFAC class dynamin-like GTPase superfamily. GB1/RHD3 GTPase family. GB1 subfamily. In terms of assembly, homodimer; homodimerizes upon GTP-binding, forming a close face-to-face dimer. Heterodimer with other family members, including GBP1, GBP2, GBP3 and GBP4. May also form tetramers (dimer of dimers) in the presence of GTP. Interacts with NLRP3, possibly in its tetrameric form, and promotes PYCARD/ASC polymerization. As to quaternary structure, homodimer; homodimerizes upon GTP-binding. GDP-bound form remains homodimeric. Homodimer; homodimerizes upon GTP-binding. GDP-bound is monomeric. Isoprenylation is required for proper subcellular location. Expressed in peripheral blood monocytes (at protein level).

The protein resides in the cytoplasmic vesicle membrane. Its subcellular location is the golgi apparatus membrane. It localises to the cytoplasm. The catalysed reaction is GTP + H2O = GDP + phosphate + H(+). In terms of biological role, interferon (IFN)-inducible GTPase that plays important roles in innate immunity against a diverse range of bacterial, viral and protozoan pathogens. Hydrolyzes GTP, but in contrast to other family members, does not produce GMP. Following infection, recruited to the pathogen-containing vacuoles or vacuole-escaped bacteria and acts as a positive regulator of inflammasome assembly by promoting the release of inflammasome ligands from bacteria. Acts by promoting lysis of pathogen-containing vacuoles, releasing pathogens into the cytosol. Following pathogen release in the cytosol, promotes recruitment of proteins that mediate bacterial cytolysis: this liberates ligands that are detected by inflammasomes, such as lipopolysaccharide (LPS) that activates the non-canonical CASP4/CASP11 inflammasome or double-stranded DNA (dsDNA) that activates the AIM2 inflammasome. As an activator of NLRP3 inflammasome assembly: promotes selective NLRP3 inflammasome assembly in response to microbial and soluble, but not crystalline, agents. Independently of its GTPase activity, acts as an inhibitor of various viruses infectivity, such as HIV-1, Zika and influenza A viruses, by inhibiting FURIN-mediated maturation of viral envelope proteins. Antigenic tumor-specific truncated splice form. The sequence is that of Guanylate-binding protein 5 from Homo sapiens (Human).